The sequence spans 687 residues: Sphingoid long chain base kinase 5 (687 aa).

The disordered stretch occupies residues 1-20 (MTLKPSKRRKGRSRHSRKKQ). Residues Cys91 and Cys94 are each lipidated (S-palmitoyl cysteine; by AKR1). Over residues 101-116 (IDRSETSTTDTSKDDL) the composition is skewed to basic and acidic residues. Disordered stretches follow at residues 101-130 (IDRSETSTTDTSKDDLSANPKLHYPSVNGQ) and 180-207 (DELESSQKKERKGNSLSRGSNSSSSLLT). Positions 193–207 (NSLSRGSNSSSSLLT) are enriched in low complexity. The DAGKc domain occupies 266-405 (RRNKSIFVII…IDLMCCSQPS (140 aa)). ATP contacts are provided by residues 276-278 (NPF) and Thr308. 333–336 (SGDG) is a substrate binding site. The active-site Proton donor/acceptor is the Asp335. ATP contacts are provided by residues Glu340, 366-368 (GSG), Arg434, and Arg440. A compositionally biased stretch (acidic residues) spans 506–524 (EYETENEDEDEDADADDED). The disordered stretch occupies residues 506–525 (EYETENEDEDEDADADDEDS). ATP is bound at residue 652–654 (DGE).

It is found in the golgi apparatus membrane. The catalysed reaction is (4R)-hydroxysphinganine + ATP = (4R)-hydroxysphinganine 1-phosphate + ADP + H(+). The enzyme catalyses a sphingoid base + ATP = a sphingoid 1-phosphate + ADP + H(+). It carries out the reaction sphinganine + ATP = sphinganine 1-phosphate + ADP + H(+). In terms of biological role, catalyzes the phosphorylation of the sphingoid long chain bases dihydrosphingosine (DHS or sphinganine) and phytosphingosine (PHS) to form dihydrosphingosine 1-phosphate (DHS-1P) and phytosphingosine 1-phosphate (PHS-1P) respectively. Redundant to LCB4, is only responsible for few percent of the total activity. Involved in the biosynthesis of sphingolipids and ceramides. Involved in heat-induced transient cell cycle arrest. Accumulation of phosphorylated sphingoid long chain bases (LCBPs) stimulates calcium influx and activates calcineurin signaling. Involved in heat-stress resistance. In Saccharomyces cerevisiae (strain ATCC 204508 / S288c) (Baker's yeast), this protein is Sphingoid long chain base kinase 5 (LCB5).